Reading from the N-terminus, the 938-residue chain is RIPOR family member 3 (938 aa).

Ser-9, Ser-24, and Ser-340 each carry phosphoserine. A Phosphothreonine modification is found at Thr-345. Ser-351 and Ser-384 each carry phosphoserine. Disordered stretches follow at residues Glu-402–Val-430 and Phe-579–Glu-603.

The protein belongs to the RIPOR family.

This Mus musculus (Mouse) protein is RIPOR family member 3.